A 191-amino-acid chain; its full sequence is Adenylate kinase (191 aa).

Residue 10–15 (AAGKGT) coordinates ATP. The tract at residues 30-59 (STGDMLRAAIASGSELGQRVKGVLDRGELV) is NMP. Residues Thr-31, Arg-36, 57-59 (ELV), 85-88 (GFPR), and Gln-92 contribute to the AMP site. An LID region spans residues 126–136 (KRFEEQGRPDD). Arg-127 is a binding site for ATP. AMP is bound by residues Arg-133 and Arg-144. An ATP-binding site is contributed by Gly-172.

It belongs to the adenylate kinase family. Monomer.

It is found in the cytoplasm. It carries out the reaction AMP + ATP = 2 ADP. It participates in purine metabolism; AMP biosynthesis via salvage pathway; AMP from ADP: step 1/1. In terms of biological role, catalyzes the reversible transfer of the terminal phosphate group between ATP and AMP. Plays an important role in cellular energy homeostasis and in adenine nucleotide metabolism. The sequence is that of Adenylate kinase from Caulobacter vibrioides (strain ATCC 19089 / CIP 103742 / CB 15) (Caulobacter crescentus).